The sequence spans 303 residues: Phosphoribosylaminoimidazole-succinocarboxamide synthase (303 aa).

This sequence belongs to the SAICAR synthetase family.

The catalysed reaction is 5-amino-1-(5-phospho-D-ribosyl)imidazole-4-carboxylate + L-aspartate + ATP = (2S)-2-[5-amino-1-(5-phospho-beta-D-ribosyl)imidazole-4-carboxamido]succinate + ADP + phosphate + 2 H(+). It functions in the pathway purine metabolism; IMP biosynthesis via de novo pathway; 5-amino-1-(5-phospho-D-ribosyl)imidazole-4-carboxamide from 5-amino-1-(5-phospho-D-ribosyl)imidazole-4-carboxylate: step 1/2. The protein is Phosphoribosylaminoimidazole-succinocarboxamide synthase (ADE1) of Pichia angusta (Yeast).